Consider the following 175-residue polypeptide: Bifunctional protein PyrR (175 aa).

A PRPP-binding motif is present at residues 97–109; sequence IVLIDDVLFTGRT.

This sequence belongs to the purine/pyrimidine phosphoribosyltransferase family. PyrR subfamily. As to quaternary structure, homodimer and homohexamer; in equilibrium.

The catalysed reaction is UMP + diphosphate = 5-phospho-alpha-D-ribose 1-diphosphate + uracil. Its function is as follows. Regulates transcriptional attenuation of the pyrimidine nucleotide (pyr) operon by binding in a uridine-dependent manner to specific sites on pyr mRNA. This disrupts an antiterminator hairpin in the RNA and favors formation of a downstream transcription terminator, leading to a reduced expression of downstream genes. Functionally, also displays a weak uracil phosphoribosyltransferase activity which is not physiologically significant. This Leuconostoc mesenteroides subsp. mesenteroides (strain ATCC 8293 / DSM 20343 / BCRC 11652 / CCM 1803 / JCM 6124 / NCDO 523 / NBRC 100496 / NCIMB 8023 / NCTC 12954 / NRRL B-1118 / 37Y) protein is Bifunctional protein PyrR.